A 353-amino-acid chain; its full sequence is 4-hydroxy-2-oxovalerate aldolase 1 (353 aa).

One can recognise a Pyruvate carboxyltransferase domain in the interval 14-266; it reads VRMTDTSLRD…KTGIDFFDIA (253 aa). A substrate-binding site is contributed by 22 to 23; it reads RD. D23 contacts Mn(2+). H26 acts as the Proton acceptor in catalysis. Positions 176 and 205 each coordinate substrate. Mn(2+) contacts are provided by H205 and H207. Y296 provides a ligand contact to substrate.

It belongs to the 4-hydroxy-2-oxovalerate aldolase family.

The enzyme catalyses (S)-4-hydroxy-2-oxopentanoate = acetaldehyde + pyruvate. This is 4-hydroxy-2-oxovalerate aldolase 1 from Mycobacterium sp. (strain KMS).